A 155-amino-acid polypeptide reads, in one-letter code: Myosin light chain alkali (155 aa).

EF-hand domains are found at residues 7–41 (REIE…LNLN) and 80–115 (GCYE…LGES).

In terms of assembly, myosin is a hexamer of 2 heavy chains and 4 light chains.

This chain is Myosin light chain alkali (Mlc1), found in Drosophila pseudoobscura pseudoobscura (Fruit fly).